Here is a 294-residue protein sequence, read N- to C-terminus: Putative cuticle collagen 145 (294 aa).

The signal sequence occupies residues 1-30 (MEKILVTFSTGAASIAVLAVLFTVPSLYNT). Positions 100–112 (TCPPGPPGPPGQP) are enriched in pro residues. Disordered regions lie at residues 100–133 (TCPPGPPGPPGQPGAPGTPGAPGPKGDDNTATFA) and 148–276 (PQGP…LPGN). Triple-helical region stretches follow at residues 102–127 (PPGPPGPPGQPGAPGTPGAPGPKGDD) and 148–277 (PQGP…PGND). Composition is skewed to low complexity over residues 164–194 (AGPDGQPGFPGQRGNDGFPGAPGAPGDNGQP) and 219–265 (APGA…DGQP). The 59-residue stretch at 218-276 (GAPGAPGNAGPAGPAGQDGFPGQDGAPGPAGPAGQDGFPGNAGSDGQPGAPGGPGLPGN) folds into the Collagen-like domain.

The protein belongs to the cuticular collagen family. In terms of assembly, collagen polypeptide chains are complexed within the cuticle by disulfide bonds and other types of covalent cross-links.

Functionally, nematode cuticles are composed largely of collagen-like proteins. The cuticle functions both as an exoskeleton and as a barrier to protect the worm from its environment. In Caenorhabditis elegans, this protein is Putative cuticle collagen 145 (col-145).